The primary structure comprises 279 residues: uncharacterized protein (279 aa).

A run of 6 helical transmembrane segments spans residues 29–49, 77–97, 105–125, 147–167, 186–206, and 240–260; these read PYNMIAGAIGAVVLTILALVF, VLYALAPLIPLVILVIGGTSL, WTKMGVPQAMLIGAIYGIIVT, VLGIIIAASVFVAGLKSTGAV, TIGPFLMGLITGSGDAAAIAF, and PIAGVTIVCAGLAMVSPVEMV.

This sequence belongs to the DcuC/DcuD transporter (TC 2.A.61) family.

The protein localises to the cell membrane. This is an uncharacterized protein from Haemophilus influenzae (strain ATCC 51907 / DSM 11121 / KW20 / Rd).